A 331-amino-acid chain; its full sequence is Pantothenate kinase (331 aa).

Residue 109–116 (GSVAVGKS) coordinates ATP.

The protein belongs to the prokaryotic pantothenate kinase family.

Its subcellular location is the cytoplasm. It catalyses the reaction (R)-pantothenate + ATP = (R)-4'-phosphopantothenate + ADP + H(+). Its pathway is cofactor biosynthesis; coenzyme A biosynthesis; CoA from (R)-pantothenate: step 1/5. This Rhizobium leguminosarum bv. trifolii (strain WSM2304) protein is Pantothenate kinase.